Here is a 352-residue protein sequence, read N- to C-terminus: Photosystem II D2 protein (352 aa).

The chain crosses the membrane as a helical span at residues 40 to 60 (CAYLALGGWLTGTSFVTSWYT). Chlorophyll a is bound at residue histidine 117. The helical transmembrane segment at 124-140 (GFMLRQFEIARLVGVRP) threads the bilayer. Pheophytin a is bound by residues glutamine 129 and asparagine 142. Residues 152–165 (VFVSVFLMYPLGQS) traverse the membrane as a helical segment. Residue histidine 197 participates in chlorophyll a binding. The chain crosses the membrane as a helical span at residues 207–227 (GALLCAIHGATVENTLFEDSE). A plastoquinone-binding residues include histidine 214 and phenylalanine 261. Fe cation is bound at residue histidine 214. Histidine 268 is a binding site for Fe cation. Residues 278-294 (GLWMSSIGIVGLALNLR) traverse the membrane as a helical segment.

It belongs to the reaction center PufL/M/PsbA/D family. In terms of assembly, PSII is composed of 1 copy each of membrane proteins PsbA, PsbB, PsbC, PsbD, PsbE, PsbF, PsbH, PsbI, PsbJ, PsbK, PsbL, PsbM, PsbT, PsbX, PsbY, PsbZ, Psb30/Ycf12, peripheral proteins PsbO, CyanoQ (PsbQ), PsbU, PsbV and a large number of cofactors. It forms dimeric complexes. The D1/D2 heterodimer binds P680, chlorophylls that are the primary electron donor of PSII, and subsequent electron acceptors. It shares a non-heme iron and each subunit binds pheophytin, quinone, additional chlorophylls, carotenoids and lipids. There is also a Cl(-1) ion associated with D1 and D2, which is required for oxygen evolution. The PSII complex binds additional chlorophylls, carotenoids and specific lipids. is required as a cofactor.

Its subcellular location is the cellular thylakoid membrane. The enzyme catalyses 2 a plastoquinone + 4 hnu + 2 H2O = 2 a plastoquinol + O2. Functionally, photosystem II (PSII) is a light-driven water:plastoquinone oxidoreductase that uses light energy to abstract electrons from H(2)O, generating O(2) and a proton gradient subsequently used for ATP formation. It consists of a core antenna complex that captures photons, and an electron transfer chain that converts photonic excitation into a charge separation. The D1/D2 (PsbA/PsbD) reaction center heterodimer binds P680, the primary electron donor of PSII as well as several subsequent electron acceptors. D2 is needed for assembly of a stable PSII complex. This is Photosystem II D2 protein from Synechococcus elongatus (strain ATCC 33912 / PCC 7942 / FACHB-805) (Anacystis nidulans R2).